Reading from the N-terminus, the 56-residue chain is Large ribosomal subunit protein bL32 (56 aa).

The disordered stretch occupies residues 1-29 (MAVQQNKPSRSKRGMRRSHDALTTSSVSV).

This sequence belongs to the bacterial ribosomal protein bL32 family.

The sequence is that of Large ribosomal subunit protein bL32 from Pectobacterium atrosepticum (strain SCRI 1043 / ATCC BAA-672) (Erwinia carotovora subsp. atroseptica).